Reading from the N-terminus, the 410-residue chain is Cysteine desulfurase IscS (410 aa).

Pyridoxal 5'-phosphate-binding positions include 80 to 81 (AT), Asn160, Gln188, and 208 to 210 (SGH). Lys211 bears the N6-(pyridoxal phosphate)lysine mark. Thr248 is a pyridoxal 5'-phosphate binding site. The active-site Cysteine persulfide intermediate is the Cys334. Cys334 is a [2Fe-2S] cluster binding site.

It belongs to the class-V pyridoxal-phosphate-dependent aminotransferase family. NifS/IscS subfamily. In terms of assembly, homodimer. Forms a heterotetramer with IscU, interacts with other sulfur acceptors. Pyridoxal 5'-phosphate is required as a cofactor.

It is found in the cytoplasm. The catalysed reaction is (sulfur carrier)-H + L-cysteine = (sulfur carrier)-SH + L-alanine. Its pathway is cofactor biosynthesis; iron-sulfur cluster biosynthesis. Master enzyme that delivers sulfur to a number of partners involved in Fe-S cluster assembly, tRNA modification or cofactor biosynthesis. Catalyzes the removal of elemental sulfur atoms from cysteine to produce alanine. Functions as a sulfur delivery protein for Fe-S cluster synthesis onto IscU, an Fe-S scaffold assembly protein, as well as other S acceptor proteins. This is Cysteine desulfurase IscS from Rickettsia typhi (strain ATCC VR-144 / Wilmington).